Consider the following 87-residue polypeptide: Small ribosomal subunit protein bS20 (87 aa).

Residues 1-11 (MANIKSAKKRA) show a composition bias toward basic residues. Positions 1–26 (MANIKSAKKRAVQSEKRRQHNASQRS) are disordered.

Belongs to the bacterial ribosomal protein bS20 family.

Functionally, binds directly to 16S ribosomal RNA. This chain is Small ribosomal subunit protein bS20, found in Actinobacillus pleuropneumoniae serotype 5b (strain L20).